The primary structure comprises 403 residues: Ribosomal RNA large subunit methyltransferase I (403 aa).

One can recognise a PUA domain in the interval 9–88; that stretch reads YPRLVLSKGR…ESIDIAFFTR (80 aa).

It belongs to the methyltransferase superfamily. RlmI family.

It is found in the cytoplasm. The catalysed reaction is cytidine(1962) in 23S rRNA + S-adenosyl-L-methionine = 5-methylcytidine(1962) in 23S rRNA + S-adenosyl-L-homocysteine + H(+). Functionally, specifically methylates the cytosine at position 1962 (m5C1962) of 23S rRNA. The sequence is that of Ribosomal RNA large subunit methyltransferase I from Salmonella newport (strain SL254).